The primary structure comprises 330 residues: Mitochondrial glycine transporter (330 aa).

Solcar repeat units lie at residues 11-94 (SSSY…LRQN), 122-206 (LSNL…LKKR), and 234-318 (TSAS…LIRR). Helical transmembrane passes span 17–42 (FTAG…TRLQ), 69–95 (GTVP…RQNV), 128–153 (LTTG…VRYE), 181–204 (GFGA…EQLK), 238–264 (INFG…KTRI), and 293–311 (GLGL…AWTI).

The protein belongs to the mitochondrial carrier (TC 2.A.29) family. SLC25A38 subfamily.

It is found in the mitochondrion inner membrane. The enzyme catalyses glycine(in) = glycine(out). Its function is as follows. Mitochondrial glycine transporter that imports glycine into the mitochondrial matrix. Plays an important role in providing glycine for the first enzymatic step in heme biosynthesis, the condensation of glycine with succinyl-CoA to produce 5-aminolevulinate (ALA) in the mitochondrial matrix. The chain is Mitochondrial glycine transporter from Sclerotinia sclerotiorum (strain ATCC 18683 / 1980 / Ss-1) (White mold).